The following is a 1507-amino-acid chain: Chromatin-remodeling ATPase INO80 (1507 aa).

Disordered regions lie at residues 30-82 (PEDE…DAED) and 428-452 (RKKQEKEAAEAFKREQEQRESKRQQ). Polar residues predominate over residues 38–67 (GSSSQDESRSTQGGVVANYSNGSKSRMNAS). The DBINO domain occupies 350–475 (AWINIVRRDI…SHFMQNKTDS (126 aa)). Residues 428–450 (RKKQEKEAAEAFKREQEQRESKR) are compositionally biased toward basic and acidic residues. One can recognise a Helicase ATP-binding domain in the interval 598–769 (VNCYEQGLNG…WALLHFIMPM (172 aa)). 611-618 (DEMGLGKT) lines the ATP pocket. The Helicase C-terminal domain maps to 1210 to 1360 (TLDILLKRLR…QLVMTGGHVQ (151 aa)). The segment at 1415-1507 (LEELEDVDRQ…KGFDPSSSAN (93 aa)) is disordered. Positions 1491 to 1507 (ASVTESNKGFDPSSSAN) are enriched in polar residues.

This sequence belongs to the SNF2/RAD54 helicase family. As to quaternary structure, component of the INO80 chromatin-remodeling complex. Associates with REF6/EIN6.

It localises to the nucleus. It carries out the reaction ATP + H2O = ADP + phosphate + H(+). ATPase component of the chromatin remodeling INO80 complex which is involved in transcriptional regulation, DNA replication and DNA repair. Binds DNA. As part of the INO80 complex, remodels chromatin by shifting nucleosomes. The INO80 complex controls ethylene-induced H2A.Z eviction dynamics. Positive regulator of homologous recombination, but not an essential component of homologous recombination. Not involved in the illegitimate repair pathway. This is Chromatin-remodeling ATPase INO80 from Arabidopsis thaliana (Mouse-ear cress).